The chain runs to 278 residues: Probable endonuclease 4 (278 aa).

Positions 69, 109, 145, 179, 182, 214, 227, 229, and 259 each coordinate Zn(2+).

It belongs to the AP endonuclease 2 family. It depends on Zn(2+) as a cofactor.

It carries out the reaction Endonucleolytic cleavage to 5'-phosphooligonucleotide end-products.. Its function is as follows. Endonuclease IV plays a role in DNA repair. It cleaves phosphodiester bonds at apurinic or apyrimidinic (AP) sites, generating a 3'-hydroxyl group and a 5'-terminal sugar phosphate. The chain is Probable endonuclease 4 from Bacteroides fragilis (strain ATCC 25285 / DSM 2151 / CCUG 4856 / JCM 11019 / LMG 10263 / NCTC 9343 / Onslow / VPI 2553 / EN-2).